Reading from the N-terminus, the 154-residue chain is uncharacterized protein (154 aa).

4 consecutive transmembrane segments (helical) span residues 39–61 (LLIFGSIAIAYTVIYISGLFFAR), 65–87 (LPYIRKILEIGISVIFYFLVSLL), 94–113 (VESLLLLKTLFLVQTIRVFI), and 128–150 (LLINIFSILGGISFFIIKLSPFT).

It is found in the cell membrane. This is an uncharacterized protein from Aquifex aeolicus (strain VF5).